The following is a 114-amino-acid chain: Cystatin Pr17a (114 aa).

The N-terminal stretch at 1 to 18 (MSCLKIITLFLFLAAVIA) is a signal peptide. Positions 31–109 (GAPEQINPND…QAWLKKTSVK (79 aa)) constitute a Cystatin domain. Cys93 and Cys113 are oxidised to a cystine.

This sequence belongs to the cystatin family. Expressed by the venom gland (posterior main gland) (at protein level).

It localises to the secreted. The polypeptide is Cystatin Pr17a (Platymeris rhadamanthus (Red spot assassin bug)).